We begin with the raw amino-acid sequence, 428 residues long: Immunoglobulin superfamily member 11 (428 aa).

The signal sequence occupies residues 1-22 (MTRRRSAPASWLLVSLLGVATS). In terms of domain architecture, Ig-like V-type spans 23 to 136 (LEVSESPGSV…DRGGRNIGVT (114 aa)). Over 23 to 240 (LEVSESPGSV…QVISPQPRSV (218 aa)) the chain is Extracellular. Disulfide bonds link Cys44/Cys120 and Cys165/Cys215. A glycan (N-linked (GlcNAc...) asparagine) is linked at Asn102. The 91-residue stretch at 144 to 234 (PSAPQCQIQG…TCLLDLQVIS (91 aa)) folds into the Ig-like C2-type domain. Residues 241-261 (GVIAGAVGTGAVLIVICLALI) traverse the membrane as a helical segment. Residues 262 to 428 (SGAFFYWRSK…PAQSRAGSLV (167 aa)) lie on the Cytoplasmic side of the membrane. The residue at position 375 (Arg375) is an Omega-N-methylarginine. Over residues 376-389 (GSSPQVLPRNNGSV) the composition is skewed to polar residues. Residues 376–396 (GSSPQVLPRNNGSVSRKPWPQ) are disordered.

In terms of processing, N-glycosylated. Highly expressed in testis and detected in kidney and adrenal gland. In brain, expressed in commissure fibers of the corpus callosum and pyramidal cell layers of the dentate gyrus and hippocampus where it is probably expressed by both neurons and glial cells.

It is found in the cell membrane. In terms of biological role, functions as a cell adhesion molecule through homophilic interaction. Stimulates cell growth. The polypeptide is Immunoglobulin superfamily member 11 (Igsf11) (Mus musculus (Mouse)).